Consider the following 157-residue polypeptide: Electron transfer flavoprotein regulatory factor 1 homolog (157 aa).

The protein belongs to the complex I LYR family.

It localises to the mitochondrion. The chain is Electron transfer flavoprotein regulatory factor 1 homolog from Dictyostelium discoideum (Social amoeba).